A 379-amino-acid chain; its full sequence is Succinyl-diaminopimelate desuccinylase (379 aa).

Residue histidine 70 coordinates Zn(2+). The active site involves aspartate 72. Aspartate 103 is a Zn(2+) binding site. Glutamate 137 acts as the Proton acceptor in catalysis. 3 residues coordinate Zn(2+): glutamate 138, glutamate 166, and histidine 352.

It belongs to the peptidase M20A family. DapE subfamily. As to quaternary structure, homodimer. The cofactor is Zn(2+). It depends on Co(2+) as a cofactor.

The enzyme catalyses N-succinyl-(2S,6S)-2,6-diaminopimelate + H2O = (2S,6S)-2,6-diaminopimelate + succinate. The protein operates within amino-acid biosynthesis; L-lysine biosynthesis via DAP pathway; LL-2,6-diaminopimelate from (S)-tetrahydrodipicolinate (succinylase route): step 3/3. Its function is as follows. Catalyzes the hydrolysis of N-succinyl-L,L-diaminopimelic acid (SDAP), forming succinate and LL-2,6-diaminopimelate (DAP), an intermediate involved in the bacterial biosynthesis of lysine and meso-diaminopimelic acid, an essential component of bacterial cell walls. This Burkholderia lata (strain ATCC 17760 / DSM 23089 / LMG 22485 / NCIMB 9086 / R18194 / 383) protein is Succinyl-diaminopimelate desuccinylase.